Reading from the N-terminus, the 576-residue chain is Formate--tetrahydrofolate ligase 2 (576 aa).

Residue 69–76 (TPLGEGKT) participates in ATP binding.

It belongs to the formate--tetrahydrofolate ligase family.

The enzyme catalyses (6S)-5,6,7,8-tetrahydrofolate + formate + ATP = (6R)-10-formyltetrahydrofolate + ADP + phosphate. It functions in the pathway one-carbon metabolism; tetrahydrofolate interconversion. The protein is Formate--tetrahydrofolate ligase 2 of Rubrobacter xylanophilus (strain DSM 9941 / JCM 11954 / NBRC 16129 / PRD-1).